We begin with the raw amino-acid sequence, 116 residues long: uncharacterized protein (116 aa).

A helical membrane pass occupies residues 20–42 (YLNKYYSVITYFLAFLTKFAILL). The disordered stretch occupies residues 95–116 (IEFQSKSSPVPPASESNKGINE).

The protein resides in the membrane. This is an uncharacterized protein from Saccharomyces cerevisiae (strain ATCC 204508 / S288c) (Baker's yeast).